The primary structure comprises 139 residues: Inactive palmitoleoyl-protein carboxylesterase notum1b (139 aa).

The protein belongs to the pectinacetylesterase family. Notum subfamily.

Functionally, probable inactive palmitoleoyl-protein carboxylesterase. In Danio rerio (Zebrafish), this protein is Inactive palmitoleoyl-protein carboxylesterase notum1b.